The chain runs to 489 residues: Poly(A) RNA polymerase GLD2 (489 aa).

Positions 93–118 (RQRFSCPSPHNQSARNSNFTSQPVTR) are disordered. A compositionally biased stretch (polar residues) spans 100-116 (SPHNQSARNSNFTSQPV). Mg(2+) contacts are provided by Asp-219 and Asp-221. The 55-residue stretch at 386–440 (SLGDLFLGFLRYYATVFKWDKQVISVRMARTLPKSNCKEWKDKFICVEEPFNRTN) folds into the PAP-associated domain.

This sequence belongs to the DNA polymerase type-B-like family. GLD2 subfamily. Requires Mg(2+) as cofactor. Mn(2+) is required as a cofactor.

It is found in the cytoplasm. It catalyses the reaction RNA(n) + ATP = RNA(n)-3'-adenine ribonucleotide + diphosphate. Its function is as follows. Cytoplasmic poly(A) RNA polymerase that adds successive AMP monomers to the 3'-end of specific RNAs, forming a poly(A) tail. In contrast to the canonical nuclear poly(A) RNA polymerase, it only adds poly(A) to selected cytoplasmic mRNAs. May not play a role in replication-dependent histone mRNA degradation. This is Poly(A) RNA polymerase GLD2 from Danio rerio (Zebrafish).